The chain runs to 266 residues: 3-methyl-2-oxobutanoate hydroxymethyltransferase (266 aa).

Mg(2+)-binding residues include D45 and D84. 3-methyl-2-oxobutanoate is bound by residues 45-46 (DS), D84, and K112. E114 is a Mg(2+) binding site. Catalysis depends on E181, which acts as the Proton acceptor.

Belongs to the PanB family. In terms of assembly, homodecamer; pentamer of dimers. Mg(2+) serves as cofactor.

The protein localises to the cytoplasm. It carries out the reaction 3-methyl-2-oxobutanoate + (6R)-5,10-methylene-5,6,7,8-tetrahydrofolate + H2O = 2-dehydropantoate + (6S)-5,6,7,8-tetrahydrofolate. Its pathway is cofactor biosynthesis; (R)-pantothenate biosynthesis; (R)-pantoate from 3-methyl-2-oxobutanoate: step 1/2. In terms of biological role, catalyzes the reversible reaction in which hydroxymethyl group from 5,10-methylenetetrahydrofolate is transferred onto alpha-ketoisovalerate to form ketopantoate. The polypeptide is 3-methyl-2-oxobutanoate hydroxymethyltransferase (Pseudomonas syringae pv. tomato (strain ATCC BAA-871 / DC3000)).